A 567-amino-acid chain; its full sequence is Proline--tRNA ligase (567 aa).

This sequence belongs to the class-II aminoacyl-tRNA synthetase family. ProS type 1 subfamily. Homodimer.

The protein resides in the cytoplasm. The enzyme catalyses tRNA(Pro) + L-proline + ATP = L-prolyl-tRNA(Pro) + AMP + diphosphate. In terms of biological role, catalyzes the attachment of proline to tRNA(Pro) in a two-step reaction: proline is first activated by ATP to form Pro-AMP and then transferred to the acceptor end of tRNA(Pro). As ProRS can inadvertently accommodate and process non-cognate amino acids such as alanine and cysteine, to avoid such errors it has two additional distinct editing activities against alanine. One activity is designated as 'pretransfer' editing and involves the tRNA(Pro)-independent hydrolysis of activated Ala-AMP. The other activity is designated 'posttransfer' editing and involves deacylation of mischarged Ala-tRNA(Pro). The misacylated Cys-tRNA(Pro) is not edited by ProRS. The protein is Proline--tRNA ligase of Streptomyces coelicolor (strain ATCC BAA-471 / A3(2) / M145).